A 307-amino-acid polypeptide reads, in one-letter code: Nucleotide-binding protein AAur_2084 (307 aa).

The tract at residues 1–21 (MDEATAKSGTEQDGLTPVKPP) is disordered. ATP is bound at residue 30-37 (GMSGAGRS). Position 81–84 (81–84 (DVRS)) interacts with GTP.

The protein belongs to the RapZ-like family.

Functionally, displays ATPase and GTPase activities. The polypeptide is Nucleotide-binding protein AAur_2084 (Paenarthrobacter aurescens (strain TC1)).